The following is a 287-amino-acid chain: Alpha-tubulin N-acetyltransferase 2 (287 aa).

Residues 2–193 enclose the N-acetyltransferase domain; that stretch reads VEFAFDIKHL…NNFVLYEGFF (192 aa). Acetyl-CoA-binding positions include 127–140 and 163–172; these read FYVHESRQRCGQGK and SNKMLAFMAK.

The protein belongs to the acetyltransferase ATAT1 family.

It is found in the midbody. It localises to the midbody ring. It catalyses the reaction L-lysyl-[alpha-tubulin] + acetyl-CoA = N(6)-acetyl-L-lysyl-[alpha-tubulin] + CoA + H(+). Its function is as follows. Specifically acetylates 'Lys-40' in alpha-tubulin on the lumenal side of microtubules. Promotes microtubule destabilization and accelerates microtubule dynamics; this activity may be independent of acetylation activity. Acetylates alpha-tubulin with a slow enzymatic rate, due to a catalytic site that is not optimized for acetyl transfer. Enters the microtubule through each end and diffuses quickly throughout the lumen of microtubules. Acetylates only long/old microtubules because of its slow acetylation rate since it does not have time to act on dynamically unstable microtubules before the enzyme is released. Main acetyltransferase responsible for alpha-tubulin 'Lys-40' acetylation in germline cells during the early stages of oogenesis. Required for normal egg chamber separation. This Drosophila melanogaster (Fruit fly) protein is Alpha-tubulin N-acetyltransferase 2.